We begin with the raw amino-acid sequence, 2718 residues long: Zinc finger protein 40 (2718 aa).

Disordered regions lie at residues 58 to 182 (HLKK…CISS), 210 to 256 (LSQK…AESQ), and 335 to 373 (GLTS…PMPI). S141 carries the phosphoserine modification. Positions 142-158 (ELRRWRSEGADPAKFSD) are enriched in basic and acidic residues. 2 stretches are compositionally biased toward polar residues: residues 164–182 (DSSS…CISS) and 237–256 (KNSS…AESQ). The C2H2-type 1 zinc-finger motif lies at 406 to 428 (YICEYCNRACAKPSVLLKHIRSH). A Phosphothreonine modification is found at T429. A C2H2-type 2 zinc finger spans residues 434–456 (YPCVTCGFSFKTKSNLYKHKKSH). Phosphoserine occurs at positions 476, 479, 492, 495, 571, and 577. A disordered region spans residues 484 to 511 (SIHSDVEDSGESEEEGATDERQHDLGAM). Positions 490–500 (EDSGESEEEGA) are enriched in acidic residues. The segment at 574 to 727 (RTDSPKAMDP…TPSALPTGEK (154 aa)) is disordered. Basic and acidic residues predominate over residues 576 to 585 (DSPKAMDPKP). Residues 588–612 (SSAQKQKDLQVTNVQPLSANMSQGG) show a composition bias toward polar residues. A compositionally biased stretch (basic and acidic residues) spans 617–626 (ETNENSHQKG). Polar residues-rich tracts occupy residues 644 to 687 (AQLQ…QTVS) and 698 to 721 (STEQ…TPSA). 2 positions are modified to phosphoserine: S670 and S681. Residues 956-986 (GTMFECETCRNRYRKLENFENHKKFYCSELH) form a CCHC HIVEP-type zinc finger. The disordered stretch occupies residues 1022-1062 (WEQTPQIRKRRKMKSVGDDEELQQNESGTSPKSSEGLQFQN). A phosphoserine mark is found at S1036, S1051, S1091, S1158, S1161, and S1180. Positions 1045-1062 (QNESGTSPKSSEGLQFQN) are enriched in polar residues. The interval 1138 to 1169 (HTNSLSRPNSFDKPEPFERASPVSFQELNRTG) is disordered. Over residues 1160–1169 (VSFQELNRTG) the composition is skewed to polar residues. Composition is skewed to basic and acidic residues over residues 1202–1219 (LRGE…ERHV) and 1246–1259 (DLEA…KSEK). Disordered stretches follow at residues 1202 to 1282 (LRGE…PKKK), 1384 to 1414 (RSKS…SRVG), and 1523 to 1548 (SHQS…VLSG). The residue at position 1268 (T1268) is a Phosphothreonine. Low complexity-rich tracts occupy residues 1394–1406 (TPPQ…ELQP) and 1523–1536 (SHQS…VSTQ). Residues S1735, S1740, S1749, and S1753 each carry the phosphoserine modification. The span at 1871-1883 (VRSSPAPSENTHI) shows a compositional bias: polar residues. A disordered region spans residues 1871-1911 (VRSSPAPSENTHISPLKCTDNNQERKSPGVKNQGDKVNIQE). 2 positions are modified to phosphoserine: S1884 and S2033. 2 consecutive C2H2-type zinc fingers follow at residues 2088 to 2110 (YICE…IRTH) and 2116 to 2140 (YHCT…SKAH). Disordered regions lie at residues 2155–2228 (DEQD…PVST), 2265–2303 (SDYN…HQMS), 2327–2381 (SPSS…THLF), and 2572–2718 (PASQ…VIAT). Residues 2164 to 2175 (EKQRFSYERSGY) show a composition bias toward basic and acidic residues. The span at 2176-2198 (DLEESDGPDEDDNENEDDDEDSQ) shows a compositional bias: acidic residues. 2 stretches are compositionally biased toward polar residues: residues 2199–2226 (AESV…QDPV) and 2288–2300 (TIPS…SPCH). A phosphoserine mark is found at S2327 and S2599. Positions 2573 to 2608 (ASQSKACETQPKQTSVASANQVSRTESPQGLPTVQR) are enriched in polar residues. Residues 2623-2637 (DHARLDGLSKMDTEK) are compositionally biased toward basic and acidic residues. The segment covering 2651–2663 (TSIQGQPASTSQP) has biased composition (polar residues). Residues S2669 and S2682 each carry the phosphoserine modification.

In terms of assembly, interacts with UTP4.

Its subcellular location is the nucleus. The protein resides in the cytoplasm. This protein specifically binds to the DNA sequence 5'-GGGACTTTCC-3' which is found in the enhancer elements of numerous viral promoters such as those of SV40, CMV, or HIV-1. In addition, related sequences are found in the enhancer elements of a number of cellular promoters, including those of the class I MHC, interleukin-2 receptor, and interferon-beta genes. It may act in T-cell activation. Involved in activating HIV-1 gene expression. Isoform 2 and isoform 3 also bind to the IPCS (IRF1 and p53 common sequence) DNA sequence in the promoter region of interferon regulatory factor 1 and p53 genes and are involved in transcription regulation of these genes. Isoform 2 does not activate HIV-1 gene expression. Isoform 2 and isoform 3 may be involved in apoptosis. This Homo sapiens (Human) protein is Zinc finger protein 40 (HIVEP1).